The primary structure comprises 278 residues: Ribosomal RNA small subunit methyltransferase A (278 aa).

Asparagine 28, leucine 30, glycine 55, glutamate 77, aspartate 103, and asparagine 122 together coordinate S-adenosyl-L-methionine.

This sequence belongs to the class I-like SAM-binding methyltransferase superfamily. rRNA adenine N(6)-methyltransferase family. RsmA subfamily.

Its subcellular location is the cytoplasm. The catalysed reaction is adenosine(1518)/adenosine(1519) in 16S rRNA + 4 S-adenosyl-L-methionine = N(6)-dimethyladenosine(1518)/N(6)-dimethyladenosine(1519) in 16S rRNA + 4 S-adenosyl-L-homocysteine + 4 H(+). Functionally, specifically dimethylates two adjacent adenosines (A1518 and A1519) in the loop of a conserved hairpin near the 3'-end of 16S rRNA in the 30S particle. May play a critical role in biogenesis of 30S subunits. The polypeptide is Ribosomal RNA small subunit methyltransferase A (Cereibacter sphaeroides (strain ATCC 17029 / ATH 2.4.9) (Rhodobacter sphaeroides)).